Here is a 55-residue protein sequence, read N- to C-terminus: Ribosome biogenesis protein Nop10 (55 aa).

It belongs to the NOP10 family.

Its function is as follows. Involved in ribosome biogenesis; more specifically in 18S rRNA pseudouridylation and in cleavage of pre-rRNA. This is Ribosome biogenesis protein Nop10 from Methanosphaera stadtmanae (strain ATCC 43021 / DSM 3091 / JCM 11832 / MCB-3).